A 276-amino-acid polypeptide reads, in one-letter code: MGNSMKSTPAPAERPLPNPEGLDSDFLAVLSDYPSPDISPPIFRRGEKLRVISDEGGWWKAISLSTGRESYIPGICVARVYHGWLFEGLGRDKAEELLQLPDTKVGSFMIRESETKKGFYSLSVRHRQVKHYRIFRLPNNWYYISPRLTFQCLEDLVNHYSEVADGLCCVLTTPCLTQSTAAPAVRASSSPVTLRQKTVDWRRVSRLQEDPEGTENPLGVDESLFSYGLRESIASYLSLTSEDNTSFDRKKKSISLMYGGSKRKSSFFSSPPYFED.

The N-myristoyl glycine moiety is linked to residue glycine 2. One can recognise an SH3 domain in the interval 22 to 82; it reads LDSDFLAVLS…PGICVARVYH (61 aa). The region spanning 84-175 is the SH2 domain; the sequence is WLFEGLGRDK…GLCCVLTTPC (92 aa). The interval 212–276 is SLA C-terminal; the sequence is EGTENPLGVD…FFSSPPYFED (65 aa). Residue serine 253 is modified to Phosphoserine. Tyrosine 273 bears the Phosphotyrosine mark.

Interacts with EPHA2, VAV1, LCP2 and PDGFRB. Homodimer. Homodimerization and interaction with phosphorylated CBL occurs via its C-terminal domain. Interacts with phosphorylated proteins ZAP70, CD3Z, SYK and LAT via its SH2 domain. Expressed in lung and fetal brain. Weakly expressed in heart, adult brain, placenta, liver, skeletal muscle, kidney and pancreas.

It localises to the cytoplasm. Its subcellular location is the endosome. Its function is as follows. Adapter protein, which negatively regulates T-cell receptor (TCR) signaling. Inhibits T-cell antigen-receptor induced activation of nuclear factor of activated T-cells. Involved in the negative regulation of positive selection and mitosis of T-cells. May act by linking signaling proteins such as ZAP70 with CBL, leading to a CBL dependent degradation of signaling proteins. The protein is Src-like-adapter (SLA) of Homo sapiens (Human).